Reading from the N-terminus, the 514-residue chain is Putative thymidine phosphorylase (514 aa).

It belongs to the thymidine/pyrimidine-nucleoside phosphorylase family. Type 2 subfamily.

It catalyses the reaction thymidine + phosphate = 2-deoxy-alpha-D-ribose 1-phosphate + thymine. This Rhodopseudomonas palustris (strain ATCC BAA-98 / CGA009) protein is Putative thymidine phosphorylase.